The following is a 590-amino-acid chain: Arginine--tRNA ligase (590 aa).

The short motif at 134–144 (ANPTGPMHVGH) is the 'HIGH' region element.

It belongs to the class-I aminoacyl-tRNA synthetase family. As to quaternary structure, monomer.

The protein localises to the cytoplasm. It carries out the reaction tRNA(Arg) + L-arginine + ATP = L-arginyl-tRNA(Arg) + AMP + diphosphate. The polypeptide is Arginine--tRNA ligase (Beijerinckia indica subsp. indica (strain ATCC 9039 / DSM 1715 / NCIMB 8712)).